Consider the following 94-residue polypeptide: Integration host factor subunit beta (94 aa).

Belongs to the bacterial histone-like protein family. Heterodimer of an alpha and a beta chain.

Its function is as follows. This protein is one of the two subunits of integration host factor, a specific DNA-binding protein that functions in genetic recombination as well as in transcriptional and translational control. In Brucella anthropi (strain ATCC 49188 / DSM 6882 / CCUG 24695 / JCM 21032 / LMG 3331 / NBRC 15819 / NCTC 12168 / Alc 37) (Ochrobactrum anthropi), this protein is Integration host factor subunit beta.